A 318-amino-acid chain; its full sequence is uncharacterized protein (318 aa).

This sequence to E.coli YfaT and P.aeruginosa PA4490.

This is an uncharacterized protein from Thermotoga maritima (strain ATCC 43589 / DSM 3109 / JCM 10099 / NBRC 100826 / MSB8).